Consider the following 851-residue polypeptide: MISRSYTNLLDLASGNFPVMGRERRRLPRVMTVPGNVSEFDEDQAYSVSSDNPSSVSSDRMIIVANRLPLKAEKRNGSWSFSWDQDSLYLQLKDGLPEDMEILYVGSLSVDVDSNEQDDVAQILLDKFKCVPTFFPPDLQSKFYDGFCKRQIWPLFHYMLPFSADHGGRFDRSLWEAYVATNKLFFQKVIEVINPDDDFVWIHDYHLMVLPTFLRRRFNRIRMGFFLHSPFPSSEIYRSLPVREEILKALLNSDLIGFHTFDYARHFLTCCSRMLGLEYQSKRGYIGLEYYGRTVGIKIMPVGINMGRIQSVMRYSEEEGKVMELRNRFEGKTVLLGIDDMDIFKGINLKLLAMEQMLRQHPNWRGRAVLVQIVNPARGKGIDVEEIRGEIEESCRRINGEFGKPGYQPIIYIDTPVSINEINAYYHIAECVVVTAVRDGMNLTPYEYIVCRQGLLGSESDFSGPKKSMLVASEFIGCSPSLSGAIRVNPWNVEATGEALNEALSMSDAEKQLRHEKHFRYVSTHDVAYWSRSFLQDLERICVDHFKKRCWGMGISFGFRVVALDPNFRKLSIPCIVSDYKRAKSRAILLDYDGTLMPQNSINKAPSQEVLNFLDALCEDKKNSIFIVSGRGRESLSKWFTPCKKIGIAAEHGYFLKWSGSEEWETCGQSSDFGWMQIVEPVMKQYTESTDGSSIEIKESALVWQYRDADPGFGSLQAKEMLEHLESVLANEPVAVKSGHYIVEVKPQGVSKGSVSEKIFSSMAGKGKPVDFVLCIGDDRSDEDMFEAIGNAMSKRLLCDNALVFACTVGQKPSKAKYYLDDTTEVTCMLESLAEASEASNFSMRELDEAL.

S5 carries the phosphoserine modification. T32 is subject to Phosphothreonine. The interval 59–540 (DRMIIVANRL…SRSFLQDLER (482 aa)) is glycosyltransferase.

This sequence in the N-terminal section; belongs to the glycosyltransferase 20 family. The protein in the C-terminal section; belongs to the trehalose phosphatase family. In terms of assembly, binds to the phosphopeptide-binding site of GRF/14-3-3. In terms of processing, phosphorylated. Expressed in seedlings, leaves, roots, stems, flowers and siliques.

It carries out the reaction D-glucose 6-phosphate + UDP-alpha-D-glucose = alpha,alpha-trehalose 6-phosphate + UDP + H(+). This is Probable alpha,alpha-trehalose-phosphate synthase [UDP-forming] 7 (TPS7) from Arabidopsis thaliana (Mouse-ear cress).